Here is a 112-residue protein sequence, read N- to C-terminus: Putative galactitol utilization operon repressor (112 aa).

Positions 5–60 (SFERRNKIIQLVNEQGTVLVQDLAGVFAASEATIRADLRFLEQKGVVTRFHGGAAK) constitute an HTH deoR-type domain. Residues 22–41 (VLVQDLAGVFAASEATIRAD) constitute a DNA-binding region (H-T-H motif).

Functionally, repressor of the gat operon for galacticol transport and metabolism. In K12 strains the operon is constitutively expressed because this gene is inactive. This chain is Putative galactitol utilization operon repressor (gatR), found in Escherichia coli (strain K12).